A 336-amino-acid chain; its full sequence is HTH-type transcriptional regulator AscG (336 aa).

Residues 2–56 (TTMLEVAKRAGVSKATVSRVLSGNGYVSQETKDRVFQAVEESGYRPNLLARNLSA) enclose the HTH lacI-type domain. The H-T-H motif DNA-binding region spans 4-23 (MLEVAKRAGVSKATVSRVLS).

Repressor of the asc operon. The cryptic operon is activated by the insertion of IS186 into the ascG gene. The chain is HTH-type transcriptional regulator AscG (ascG) from Escherichia coli (strain K12).